The primary structure comprises 152 residues: Large-conductance mechanosensitive channel (152 aa).

The next 3 helical transmembrane spans lie at 21-41, 44-64, and 92-112; these read IDLA…DSLV, VVMP…NKFL, and GNFI…FWMV.

Belongs to the MscL family. As to quaternary structure, homopentamer.

It is found in the cell inner membrane. Functionally, channel that opens in response to stretch forces in the membrane lipid bilayer. May participate in the regulation of osmotic pressure changes within the cell. This Bordetella bronchiseptica (strain ATCC BAA-588 / NCTC 13252 / RB50) (Alcaligenes bronchisepticus) protein is Large-conductance mechanosensitive channel.